A 642-amino-acid polypeptide reads, in one-letter code: uncharacterized protein (642 aa).

The Mg(2+) site is built by Glu-15 and Asp-118. In terms of domain architecture, PINc spans 29 to 149; that stretch reads VCVDTCVVID…YNLAKAQGIE (121 aa). The KH domain occupies 510-578; that stretch reads DNSIDLIVPE…ELESTRIYET (69 aa).

This sequence in the N-terminal section; belongs to the PINc/VapC protein family. Mg(2+) serves as cofactor.

This is an uncharacterized protein from Methanocaldococcus jannaschii (strain ATCC 43067 / DSM 2661 / JAL-1 / JCM 10045 / NBRC 100440) (Methanococcus jannaschii).